A 68-amino-acid polypeptide reads, in one-letter code: UPF0435 protein SAB1812c (68 aa).

It belongs to the UPF0435 family.

The protein is UPF0435 protein SAB1812c of Staphylococcus aureus (strain bovine RF122 / ET3-1).